We begin with the raw amino-acid sequence, 277 residues long: Probable redox regulatory protein ML2435 (277 aa).

Belongs to the Rv0495c family.

Functionally, essential for maintaining intracellular redox homeostasis. This chain is Probable redox regulatory protein ML2435, found in Mycobacterium leprae (strain TN).